Consider the following 524-residue polypeptide: N-acetylgalactosamine-6-sulfatase (524 aa).

An N-terminal signal peptide occupies residues 1-27 (MTACSTAIRAQQLLLPVLSALGLLAAG). The segment at 28–381 (APQPPNIVLL…PTMLQGHIID (354 aa)) is catalytic domain. The Ca(2+) site is built by Asp-40, Asp-41, and Cys-80. Cys-80 (nucleophile) is an active-site residue. Residue Cys-80 is modified to 3-oxoalanine (Cys). His-143 is a catalytic residue. N-linked (GlcNAc...) asparagine glycosylation is present at Asn-205. The Ca(2+) site is built by Asp-290 and Asn-291. Cys-310 and Cys-421 are disulfide-bonded. Asn-425 carries an N-linked (GlcNAc...) asparagine glycan. Intrachain disulfides connect Cys-491–Cys-520 and Cys-503–Cys-509.

The protein belongs to the sulfatase family. As to quaternary structure, homodimer. Ca(2+) serves as cofactor. Post-translationally, the conversion to 3-oxoalanine (also known as C-formylglycine, FGly), of a serine or cysteine residue in prokaryotes and of a cysteine residue in eukaryotes, is critical for catalytic activity.

The protein resides in the lysosome. The catalysed reaction is Hydrolysis of the 6-sulfate groups of the N-acetyl-D-galactosamine 6-sulfate units of chondroitin sulfate and of the D-galactose 6-sulfate units of keratan sulfate.. This chain is N-acetylgalactosamine-6-sulfatase (Galns), found in Rattus norvegicus (Rat).